Here is a 309-residue protein sequence, read N- to C-terminus: Olfactory receptor 5AC2 (309 aa).

At 1 to 27 (MDISEGNKTLVTEFVLTGLTDRPWLHV) the chain is on the extracellular side. N-linked (GlcNAc...) asparagine glycosylation occurs at asparagine 7. A helical membrane pass occupies residues 28–48 (LFFVVFLVVYLITMVGNLGLI). Topologically, residues 49 to 56 (VLIWNDPH) are cytoplasmic. Residues 57-77 (LHMPMYLFLGGLAFSDACTST) traverse the membrane as a helical segment. Over 78-101 (SITPRMLVNFLDKTAMISLAECIT) the chain is Extracellular. Cysteine 99 and cysteine 191 are oxidised to a cystine. The helical transmembrane segment at 102–122 (QFYFFASSATTECFLLVMMAY) threads the bilayer. Over 123–135 (DRYVAICNPLLYP) the chain is Cytoplasmic. The helical transmembrane segment at 136–156 (VMMSNKLSAQLLSISYVIGFL) threads the bilayer. Topologically, residues 157-198 (HPLVHVSLLLRLTFCRFNIIHYFYCEILQLFKISCNGPSINA) are extracellular. A helical transmembrane segment spans residues 199 to 219 (LMIFIFGAFIQIPTLMTIIIS). The Cytoplasmic segment spans residues 220–239 (YTRVLFDILKKKSEKGRSKA). Residues 240–260 (FSTCGAHLLSVSLYYGTLIFM) form a helical membrane-spanning segment. The Extracellular portion of the chain corresponds to 261-273 (YVRPASGLAEDQD). A helical membrane pass occupies residues 274 to 294 (KVYSLFYTIIIPLLNPFIYSL). Residues 295-309 (RNKKVMHALRRVIRK) are Cytoplasmic-facing.

The protein belongs to the G-protein coupled receptor 1 family.

It localises to the cell membrane. Its function is as follows. Odorant receptor. In Homo sapiens (Human), this protein is Olfactory receptor 5AC2 (OR5AC2).